Reading from the N-terminus, the 396-residue chain is Elongation factor Tu (396 aa).

Positions 10 to 206 constitute a tr-type G domain; that stretch reads KPHVNIGTIG…ACDTYIPAPV (197 aa). The segment at 19 to 26 is G1; it reads GHVDHGKT. Position 19–26 (19–26) interacts with GTP; sequence GHVDHGKT. Residue T26 coordinates Mg(2+). The segment at 60–64 is G2; it reads GITIS. The tract at residues 81-84 is G3; the sequence is DCPG. Residues 81–85 and 136–139 contribute to the GTP site; these read DCPGH and NKVD. Residues 136 to 139 form a G4 region; sequence NKVD. A G5 region spans residues 174–176; the sequence is SAL.

This sequence belongs to the TRAFAC class translation factor GTPase superfamily. Classic translation factor GTPase family. EF-Tu/EF-1A subfamily. Monomer.

It localises to the cytoplasm. It carries out the reaction GTP + H2O = GDP + phosphate + H(+). GTP hydrolase that promotes the GTP-dependent binding of aminoacyl-tRNA to the A-site of ribosomes during protein biosynthesis. The polypeptide is Elongation factor Tu (Bdellovibrio bacteriovorus (strain ATCC 15356 / DSM 50701 / NCIMB 9529 / HD100)).